Here is a 499-residue protein sequence, read N- to C-terminus: Ent-kaurenoic acid oxidase 1 (499 aa).

Residues 5–25 (AWWAVAAVVAALAVVALDAAV) form a helical membrane-spanning segment. Cys-443 is a heme binding site.

Belongs to the cytochrome P450 family. It depends on heme as a cofactor.

It is found in the endoplasmic reticulum membrane. It carries out the reaction ent-kaur-16-en-19-oate + 3 reduced [NADPH--hemoprotein reductase] + 3 O2 = gibberellin A12 + 3 oxidized [NADPH--hemoprotein reductase] + 4 H2O + 4 H(+). The catalysed reaction is ent-kaur-16-en-19-oate + reduced [NADPH--hemoprotein reductase] + O2 = ent-7alpha-hydroxykaur-16-en-19-oate + oxidized [NADPH--hemoprotein reductase] + H2O + H(+). It catalyses the reaction ent-7alpha-hydroxykaur-16-en-19-oate + reduced [NADPH--hemoprotein reductase] + O2 = gibberellin A12 aldehyde + oxidized [NADPH--hemoprotein reductase] + 2 H2O + H(+). The enzyme catalyses gibberellin A12 aldehyde + reduced [NADPH--hemoprotein reductase] + O2 = gibberellin A12 + oxidized [NADPH--hemoprotein reductase] + H2O + 2 H(+). It participates in plant hormone biosynthesis; gibberellin biosynthesis. Catalyzes three successive oxidations of ent-kaurenoic acid giving gibberellin 12 (GA12), a key step in gibberellins (GAs) biosynthesis. GAs, which are involved many processes, including stem elongation, play a central role in plant development. In Hordeum vulgare (Barley), this protein is Ent-kaurenoic acid oxidase 1.